Reading from the N-terminus, the 440-residue chain is Tubulin beta-3 chain (440 aa).

GTP contacts are provided by glutamine 2, glutamate 60, serine 129, glycine 133, threonine 134, glycine 135, asparagine 195, and asparagine 217. Glutamate 60 contacts Mg(2+). The disordered stretch occupies residues 411 to 440 (SEYQQYQDATADEEGEYEDEEEEEPEHGYE). Positions 420–440 (TADEEGEYEDEEEEEPEHGYE) are enriched in acidic residues.

This sequence belongs to the tubulin family. Dimer of alpha and beta chains. A typical microtubule is a hollow water-filled tube with an outer diameter of 25 nm and an inner diameter of 15 nM. Alpha-beta heterodimers associate head-to-tail to form protofilaments running lengthwise along the microtubule wall with the beta-tubulin subunit facing the microtubule plus end conferring a structural polarity. Microtubules usually have 13 protofilaments but different protofilament numbers can be found in some organisms and specialized cells. Requires Mg(2+) as cofactor.

It is found in the cytoplasm. The protein resides in the cytoskeleton. Functionally, tubulin is the major constituent of microtubules, a cylinder consisting of laterally associated linear protofilaments composed of alpha- and beta-tubulin heterodimers. Microtubules grow by the addition of GTP-tubulin dimers to the microtubule end, where a stabilizing cap forms. Below the cap, tubulin dimers are in GDP-bound state, owing to GTPase activity of alpha-tubulin. This is Tubulin beta-3 chain (TUBB3) from Pisum sativum (Garden pea).